Consider the following 371-residue polypeptide: 4-hydroxy-3-methylbut-2-en-1-yl diphosphate synthase (flavodoxin) (371 aa).

[4Fe-4S] cluster-binding residues include Cys-270, Cys-273, Cys-305, and Glu-312.

It belongs to the IspG family. [4Fe-4S] cluster is required as a cofactor.

It catalyses the reaction (2E)-4-hydroxy-3-methylbut-2-enyl diphosphate + oxidized [flavodoxin] + H2O + 2 H(+) = 2-C-methyl-D-erythritol 2,4-cyclic diphosphate + reduced [flavodoxin]. Its pathway is isoprenoid biosynthesis; isopentenyl diphosphate biosynthesis via DXP pathway; isopentenyl diphosphate from 1-deoxy-D-xylulose 5-phosphate: step 5/6. Its function is as follows. Converts 2C-methyl-D-erythritol 2,4-cyclodiphosphate (ME-2,4cPP) into 1-hydroxy-2-methyl-2-(E)-butenyl 4-diphosphate. The protein is 4-hydroxy-3-methylbut-2-en-1-yl diphosphate synthase (flavodoxin) of Shewanella sp. (strain W3-18-1).